The following is a 432-amino-acid chain: Histidinol dehydrogenase (432 aa).

NAD(+) is bound by residues Tyr-133, Gln-194, and Asn-217. Substrate is bound by residues Ser-240, Gln-262, and His-265. 2 residues coordinate Zn(2+): Gln-262 and His-265. Catalysis depends on proton acceptor residues Glu-330 and His-331. Substrate is bound by residues His-331, Asp-364, Glu-418, and His-423. Asp-364 provides a ligand contact to Zn(2+). A Zn(2+)-binding site is contributed by His-423.

Belongs to the histidinol dehydrogenase family. Requires Zn(2+) as cofactor.

The catalysed reaction is L-histidinol + 2 NAD(+) + H2O = L-histidine + 2 NADH + 3 H(+). It participates in amino-acid biosynthesis; L-histidine biosynthesis; L-histidine from 5-phospho-alpha-D-ribose 1-diphosphate: step 9/9. Its function is as follows. Catalyzes the sequential NAD-dependent oxidations of L-histidinol to L-histidinaldehyde and then to L-histidine. The chain is Histidinol dehydrogenase from Nitrosomonas europaea (strain ATCC 19718 / CIP 103999 / KCTC 2705 / NBRC 14298).